The sequence spans 210 residues: Orotate phosphoribosyltransferase (210 aa).

Residues Arg-94, Lys-98, His-100, and 120 to 128 each bind 5-phospho-alpha-D-ribose 1-diphosphate; that span reads EDLISTGGS. Residue Ser-124 coordinates orotate.

It belongs to the purine/pyrimidine phosphoribosyltransferase family. PyrE subfamily. As to quaternary structure, homodimer. The cofactor is Mg(2+).

The enzyme catalyses orotidine 5'-phosphate + diphosphate = orotate + 5-phospho-alpha-D-ribose 1-diphosphate. Its pathway is pyrimidine metabolism; UMP biosynthesis via de novo pathway; UMP from orotate: step 1/2. Catalyzes the transfer of a ribosyl phosphate group from 5-phosphoribose 1-diphosphate to orotate, leading to the formation of orotidine monophosphate (OMP). The polypeptide is Orotate phosphoribosyltransferase (Bacillus cereus (strain B4264)).